A 216-amino-acid chain; its full sequence is Transmembrane emp24 domain-containing protein eca (216 aa).

The N-terminal stretch at 1 to 20 is a signal peptide; sequence MRDQFISLALMLCILHSACG. Topologically, residues 21-182 are lumenal; that stretch reads LYFHISETER…FRHTSESTNS (162 aa). The GOLD domain occupies 30–126; that stretch reads RKCFIEEVPD…QLRVHLDIQV (97 aa). Positions 134-164 form a coiled coil; that stretch reads ANVAQKEKLTELQLRIRQLLDQVEQITKEQN. The helical transmembrane segment at 183 to 203 threads the bilayer; the sequence is RVLWWSLAQTVVLVCMGFWQM. At 204–216 the chain is on the cytoplasmic side; that stretch reads RHLKSFFEAKKLV. A Prevents secretion from ER motif is present at residues 213-216; that stretch reads KKLV.

The protein belongs to the EMP24/GP25L family.

The protein localises to the endoplasmic reticulum membrane. Its function is as follows. Eca and bai are essential, though not redundant, for dorsoventral patterning of the embryo. Specifically required during early embryogenesis for the activity of maternal tkv, while the zygotic tkv is not affected. Involved in Golgi organization. The protein is Transmembrane emp24 domain-containing protein eca of Drosophila erecta (Fruit fly).